The sequence spans 878 residues: AP-5 complex subunit beta-1 (878 aa).

Residues 234 to 260 (RLQPQAPSWPAAEEGEGERSLTAREHS) are disordered. Residues 250–260 (GERSLTAREHS) show a composition bias toward basic and acidic residues.

In terms of assembly, probably part of the adaptor protein complex 5 (AP-5), a tetramer composed of AP5B1, AP5M1, AP5S1 and AP5Z1. Interacts with ZFYVE26 and SPG11.

Its function is as follows. As part of AP-5, a probable fifth adaptor protein complex it may be involved in endosomal transport. The protein is AP-5 complex subunit beta-1 (AP5B1) of Homo sapiens (Human).